The following is a 275-amino-acid chain: Large ribosomal subunit protein uL2 (275 aa).

The tract at residues 221 to 275 is disordered; sequence RGMTMNPVDHPMGGGEGRSKGHIPQSPWGIPAKGYKTRKSKKPSDKLIVKRRKQK.

The protein belongs to the universal ribosomal protein uL2 family. Part of the 50S ribosomal subunit. Forms a bridge to the 30S subunit in the 70S ribosome.

One of the primary rRNA binding proteins. Required for association of the 30S and 50S subunits to form the 70S ribosome, for tRNA binding and peptide bond formation. It has been suggested to have peptidyltransferase activity; this is somewhat controversial. Makes several contacts with the 16S rRNA in the 70S ribosome. The sequence is that of Large ribosomal subunit protein uL2 from Kosmotoga olearia (strain ATCC BAA-1733 / DSM 21960 / TBF 19.5.1).